The sequence spans 1517 residues: Neurite extension and migration factor (1517 aa).

Positions 381-405 (DKKKGKEEVHEDKSIEKKDEKDNGE) are enriched in basic and acidic residues. Disordered regions lie at residues 381–416 (DKKK…PCSG), 505–529 (VNER…PKKR), 644–697 (SMEA…GLIG), 732–775 (KKIK…HMSE), 1065–1084 (RHSS…SPQS), 1161–1228 (DEPA…KKGK), and 1372–1422 (AGTP…SSED). Over residues 644-663 (SMEASASSKQVSFGSDQKQA) the composition is skewed to polar residues. Low complexity predominate over residues 678-687 (SALLAAPSSA). Over residues 764 to 773 (TPGTSNSSHM) the composition is skewed to polar residues.

It is found in the nucleus. The protein localises to the cytoplasm. Involved in neurite outgrowth by regulating cell-cell adhesion via the N-cadherin signaling pathway. May act by regulating expression of protein-coding genes, such as N-cadherins and integrin beta-1 (ITGB1). The protein is Neurite extension and migration factor of Rattus norvegicus (Rat).